The following is a 266-amino-acid chain: UPF0294 protein YafD (266 aa).

This sequence belongs to the UPF0294 family.

The protein localises to the cytoplasm. The polypeptide is UPF0294 protein YafD (Salmonella typhi).